A 279-amino-acid chain; its full sequence is ATP synthase gamma chain (279 aa).

Belongs to the ATPase gamma chain family. In terms of assembly, F-type ATPases have 2 components, CF(1) - the catalytic core - and CF(0) - the membrane proton channel. CF(1) has five subunits: alpha(3), beta(3), gamma(1), delta(1), epsilon(1). CF(0) has three main subunits: a, b and c.

The protein resides in the cell membrane. Produces ATP from ADP in the presence of a proton gradient across the membrane. The gamma chain is believed to be important in regulating ATPase activity and the flow of protons through the CF(0) complex. This chain is ATP synthase gamma chain, found in Mycoplasma genitalium (strain ATCC 33530 / DSM 19775 / NCTC 10195 / G37) (Mycoplasmoides genitalium).